Consider the following 501-residue polypeptide: AKT kinase-transforming protein (501 aa).

The PH domain maps to 26-129 (AIVKEGWLHK…WATAIQTVAD (104 aa)). The interval 135 to 158 (EEETMDFRSGSPSDNSGAEEMEVS) is disordered. Residues 171 to 429 (FEYLKLLGKG…AKEIMQHRFF (259 aa)) enclose the Protein kinase domain. ATP-binding positions include 177–185 (LGKGTFGKV) and Lys200. Asp295 functions as the Proton acceptor in the catalytic mechanism. Tyr347 carries the phosphotyrosine modification. Positions 430–501 (ANIVWQDVYE…QFSYSASGTA (72 aa)) constitute an AGC-kinase C-terminal domain. The tract at residues 471–501 (TPPDQDDSMECVDSERRPHFPQFSYSASGTA) is disordered.

It belongs to the protein kinase superfamily. AGC Ser/Thr protein kinase family. RAC subfamily. In terms of assembly, interacts with mouse THEM4. Autophosphorylated on threonine and serine residues.

It catalyses the reaction L-seryl-[protein] + ATP = O-phospho-L-seryl-[protein] + ADP + H(+). It carries out the reaction L-threonyl-[protein] + ATP = O-phospho-L-threonyl-[protein] + ADP + H(+). This Mus musculus (Mouse) protein is AKT kinase-transforming protein (V-AKT).